The chain runs to 375 residues: Putative monooxygenase Rv1533 (375 aa).

FMN contacts are provided by residues Gln-190, Gly-195, Gly-224, and 243 to 246; that span reads WCGS.

Belongs to the nitronate monooxygenase family. Requires FMN as cofactor.

In Mycobacterium tuberculosis (strain ATCC 25618 / H37Rv), this protein is Putative monooxygenase Rv1533.